Consider the following 240-residue polypeptide: tRNA pseudouridine synthase A (240 aa).

The active-site Nucleophile is the aspartate 50. Substrate is bound at residue tyrosine 109.

The protein belongs to the tRNA pseudouridine synthase TruA family. Homodimer.

It catalyses the reaction uridine(38/39/40) in tRNA = pseudouridine(38/39/40) in tRNA. Functionally, formation of pseudouridine at positions 38, 39 and 40 in the anticodon stem and loop of transfer RNAs. This Campylobacter jejuni subsp. jejuni serotype O:6 (strain 81116 / NCTC 11828) protein is tRNA pseudouridine synthase A.